Consider the following 339-residue polypeptide: Methionine import ATP-binding protein MetN 2 (339 aa).

An ABC transporter domain is found at 2-241 (ISFNNVSKVY…PKTKTTQNFV (240 aa)). 38-45 (GFSGAGKS) provides a ligand contact to ATP.

It belongs to the ABC transporter superfamily. Methionine importer (TC 3.A.1.24) family. The complex is composed of two ATP-binding proteins (MetN), two transmembrane proteins (MetI) and a solute-binding protein (MetQ).

The protein resides in the cell membrane. The catalysed reaction is L-methionine(out) + ATP + H2O = L-methionine(in) + ADP + phosphate + H(+). It catalyses the reaction D-methionine(out) + ATP + H2O = D-methionine(in) + ADP + phosphate + H(+). Part of the ABC transporter complex MetNIQ involved in methionine import. Responsible for energy coupling to the transport system. This chain is Methionine import ATP-binding protein MetN 2, found in Bacillus cereus (strain ATCC 10987 / NRS 248).